The primary structure comprises 201 residues: ATP-dependent Clp protease proteolytic subunit (201 aa).

Ser98 serves as the catalytic Nucleophile. The active site involves His123.

Belongs to the peptidase S14 family. Fourteen ClpP subunits assemble into 2 heptameric rings which stack back to back to give a disk-like structure with a central cavity, resembling the structure of eukaryotic proteasomes.

The protein resides in the cytoplasm. It carries out the reaction Hydrolysis of proteins to small peptides in the presence of ATP and magnesium. alpha-casein is the usual test substrate. In the absence of ATP, only oligopeptides shorter than five residues are hydrolyzed (such as succinyl-Leu-Tyr-|-NHMec, and Leu-Tyr-Leu-|-Tyr-Trp, in which cleavage of the -Tyr-|-Leu- and -Tyr-|-Trp bonds also occurs).. Its function is as follows. Cleaves peptides in various proteins in a process that requires ATP hydrolysis. Has a chymotrypsin-like activity. Plays a major role in the degradation of misfolded proteins. This Neorickettsia sennetsu (strain ATCC VR-367 / Miyayama) (Ehrlichia sennetsu) protein is ATP-dependent Clp protease proteolytic subunit.